Here is a 60-residue protein sequence, read N- to C-terminus: UPF0337 protein SACOL1680 (60 aa).

The protein belongs to the UPF0337 (CsbD) family.

In Staphylococcus aureus (strain COL), this protein is UPF0337 protein SACOL1680.